The primary structure comprises 123 residues: MARVKRGVTTRARHKKVIKLAKGYRGRSKNCYRVALQRVEKALQYAYRDRRNRKRFFRSLWIMRINAAVRQYGLLYSDFIYGLSLANITLNRKILADMAVHNKDNFKQIVDLTKEALTKSRVG.

Belongs to the bacterial ribosomal protein bL20 family.

Binds directly to 23S ribosomal RNA and is necessary for the in vitro assembly process of the 50S ribosomal subunit. It is not involved in the protein synthesizing functions of that subunit. In Ehrlichia ruminantium (strain Gardel), this protein is Large ribosomal subunit protein bL20.